We begin with the raw amino-acid sequence, 589 residues long: Mini-chromosome maintenance complex-binding protein (589 aa).

Residues 163 to 211 are disordered; it reads VDEEMTDSMDSSTLEAGRNGSPFKKMKVGEATSSASESQVPQTSGIPPA. Polar residues predominate over residues 193-207; that stretch reads ATSSASESQVPQTSG.

The protein belongs to the MCMBP family. As to quaternary structure, interacts with the MCM complex.

It is found in the nucleus. Associated component of the MCM complex that acts as a regulator of DNA replication. Binds to the MCM complex during late S phase and may act by promoting the disassembly of the MCM complex from chromatin. Required for sister chromatid cohesion. The chain is Mini-chromosome maintenance complex-binding protein (ETG1) from Arabidopsis thaliana (Mouse-ear cress).